A 293-amino-acid polypeptide reads, in one-letter code: Probable endoribonuclease YicC (293 aa).

Belongs to the YicC/YloC family. Requires a divalent metal cation as cofactor.

Its function is as follows. Negatively modulates sporulation, probably in response to nutrient conditions. Effects expression of sporulation regulator spo0A in an indirect manner, possibly via repression of the sinRR' operon. Functionally, probably a ssRNA endonuclease. Might contribute to small RNA (sRNA) regulation. The protein is Probable endoribonuclease YicC of Clostridioides difficile (strain 630) (Peptoclostridium difficile).